Here is a 328-residue protein sequence, read N- to C-terminus: Phosphate acetyltransferase (328 aa).

It belongs to the phosphate acetyltransferase and butyryltransferase family.

The protein resides in the cytoplasm. The enzyme catalyses acetyl-CoA + phosphate = acetyl phosphate + CoA. It participates in metabolic intermediate biosynthesis; acetyl-CoA biosynthesis; acetyl-CoA from acetate: step 2/2. In Thermoanaerobacterium thermosaccharolyticum (strain ATCC 7956 / DSM 571 / NCIMB 9385 / NCA 3814 / NCTC 13789 / WDCM 00135 / 2032) (Clostridium thermosaccharolyticum), this protein is Phosphate acetyltransferase (pta).